The chain runs to 233 residues: ATP synthase subunit a, chloroplastic (233 aa).

4 helical membrane passes run 27 to 47 (VLLI…LGTL), 84 to 104 (VPFV…GALI), 122 to 142 (DINT…YAGF), and 192 to 212 (VLCL…GIFA).

It belongs to the ATPase A chain family. F-type ATPases have 2 components, CF(1) - the catalytic core - and CF(0) - the membrane proton channel. CF(1) has five subunits: alpha(3), beta(3), gamma(1), delta(1), epsilon(1). CF(0) has four main subunits: a, b, b' and c.

Its subcellular location is the plastid. It localises to the chloroplast thylakoid membrane. Key component of the proton channel; it plays a direct role in the translocation of protons across the membrane. The polypeptide is ATP synthase subunit a, chloroplastic (Ochrosphaera neapolitana).